We begin with the raw amino-acid sequence, 328 residues long: MSQQTTIRDTGEAAATNAPANSATSTSTPDNQPTPLDAFEVLLITGMSGAGRSHAADCVEDMGWYVVDNLPPKLLIPLVDMMTTSGSGSGSGVHKLAAVIDVRSSYFDELAAVLGHLDDLGVKTHILFLDASNEVLIKRYESVRRPHPLQHGNRLIDGILEERHLLEDLKERADWVIDTSSLSIHQLSTKLYETMLGSGPTTVAVHIFSFGFKYGMPIDADFVADVRFLPNPFWVPNLRELTGHDKPVADYVLSSKGAKEFLDAYEKAIEIALEGYAQEDKHYVTIAVGCTGGQHRSVAMSEELARRLRAHGLNVTVSAREQHKRHSS.

The tract at residues 1–33 (MSQQTTIRDTGEAAATNAPANSATSTSTPDNQP) is disordered. A compositionally biased stretch (low complexity) spans 13–29 (AAATNAPANSATSTSTP). 46–53 (GMSGAGRS) serves as a coordination point for ATP. Residue 101–104 (DVRS) participates in GTP binding.

The protein belongs to the RapZ-like family.

In terms of biological role, displays ATPase and GTPase activities. The chain is Nucleotide-binding protein Blon_1085/BLIJ_1109 from Bifidobacterium longum subsp. infantis (strain ATCC 15697 / DSM 20088 / JCM 1222 / NCTC 11817 / S12).